Reading from the N-terminus, the 586-residue chain is uncharacterized protein (586 aa).

Positions 1-115 are disordered; sequence MRVLVAETGR…NTEKLAGRDD (115 aa). A compositionally biased stretch (basic and acidic residues) spans 8-20; that stretch reads TGREDNVSVHSRE. The segment covering 21 to 31 has biased composition (polar residues); that stretch reads VSVNGSDSGTG. Positions 35 to 44 are enriched in basic and acidic residues; that stretch reads YKLETDDEHP. Over residues 76-107 the composition is skewed to polar residues; sequence TGMNTEYNDDNSSLVNTPRDSTTYAETNSPNT. WD repeat units lie at residues 184–223, 253–291, 293–333, 335–374, 387–430, and 432–474; these read QFKESVWASEISKSGKYLATAGKDAIIRVWKVIETPERRE, GHNAEVLSISWSKNDFLLTSSADRTVRLWHPKSTKSLAV, RHNE…ILHW, ELEYVVSTICFYPDGESIVVGMFYGLCAIYETKNLQYVSS, CRVT…LVLK, and SDAH…LINA.

It is found in the cytoplasm. Its subcellular location is the nucleus. This is an uncharacterized protein from Schizosaccharomyces pombe (strain 972 / ATCC 24843) (Fission yeast).